A 353-amino-acid polypeptide reads, in one-letter code: Peptide-N(4)-(N-acetyl-beta-glucosaminyl)asparagine amidase (353 aa).

Zn(2+) contacts are provided by cysteine 125, cysteine 128, and cysteine 159. Cysteine 185 acts as the Nucleophile in catalysis. Catalysis depends on residues histidine 212 and aspartate 229. Residue glutamate 232 participates in substrate binding. A disordered region spans residues serine 316–serine 353. The span at aspartate 325–threonine 334 shows a compositional bias: low complexity.

It belongs to the transglutaminase-like superfamily. PNGase family. It depends on Zn(2+) as a cofactor.

It is found in the cytoplasm. It carries out the reaction Hydrolysis of an N(4)-(acetyl-beta-D-glucosaminyl)asparagine residue in which the glucosamine residue may be further glycosylated, to yield a (substituted) N-acetyl-beta-D-glucosaminylamine and a peptide containing an aspartate residue.. Functionally, specifically deglycosylates the denatured form of N-linked glycoproteins in the cytoplasm and assists their proteasome-mediated degradation. Cleaves the beta-aspartyl-glucosamine (GlcNAc) of the glycan and the amide side chain of Asn, converting Asn to Asp. Prefers proteins containing high-mannose over those bearing complex type oligosaccharides. Can recognize misfolded proteins in the endoplasmic reticulum that are exported to the cytosol to be destroyed and deglycosylate them, while it has no activity toward native proteins. Deglycosylation is a prerequisite for subsequent proteasome-mediated degradation of some, but not all, misfolded glycoproteins. The sequence is that of Peptide-N(4)-(N-acetyl-beta-glucosaminyl)asparagine amidase (PNG1) from Kluyveromyces lactis (strain ATCC 8585 / CBS 2359 / DSM 70799 / NBRC 1267 / NRRL Y-1140 / WM37) (Yeast).